The chain runs to 49 residues: Small, acid-soluble spore protein O (49 aa).

The segment at 1 to 49 is disordered; it reads MGKRKANHTISGMNAASAQGQGAGYNEEFANENLTPAERQNNKKRKKNQ. Polar residues predominate over residues 8-20; that stretch reads HTISGMNAASAQG.

It belongs to the SspO family.

Its subcellular location is the spore core. The polypeptide is Small, acid-soluble spore protein O (Bacillus anthracis (strain A0248)).